Here is a 366-residue protein sequence, read N- to C-terminus: Peptide chain release factor 2 (366 aa).

Glutamine 251 is modified (N5-methylglutamine).

The protein belongs to the prokaryotic/mitochondrial release factor family. Post-translationally, methylated by PrmC. Methylation increases the termination efficiency of RF2.

It is found in the cytoplasm. Its function is as follows. Peptide chain release factor 2 directs the termination of translation in response to the peptide chain termination codons UGA and UAA. The chain is Peptide chain release factor 2 (prfB) from Bacillus subtilis (strain 168).